Consider the following 115-residue polypeptide: uncharacterized protein (115 aa).

The region spanning 63 to 108 (GSPCGFEFREAITCQKTNSDGEIEQGACGKELMSFMECVTRTQCFG) is the CHCH domain. 2 short sequence motifs (cx9C motif) span residues 66–76 (CGFEFREAITC) and 90–100 (CGKELMSFMEC). 2 cysteine pairs are disulfide-bonded: cysteine 66–cysteine 100 and cysteine 76–cysteine 90.

This is an uncharacterized protein from Caenorhabditis elegans.